Reading from the N-terminus, the 131-residue chain is Profilin-1 (131 aa).

Belongs to the profilin family. As to quaternary structure, occurs in many kinds of cells as a complex with monomeric actin in a 1:1 ratio.

It is found in the cytoplasm. The protein localises to the cytoskeleton. Its function is as follows. Binds to actin and affects the structure of the cytoskeleton. At high concentrations, profilin prevents the polymerization of actin, whereas it enhances it at low concentrations. By binding to PIP2, it inhibits the formation of IP3 and DG. The sequence is that of Profilin-1 from Hevea brasiliensis (Para rubber tree).